A 420-amino-acid polypeptide reads, in one-letter code: MMINIPRGTQDILPAETAKWRYVESKLHNIAANYNYKEIRTPMFESTDLFARGVGGSTDIVQKEMYTFKDKGDRSLTLRPEGTAAVVRSYIENKMNGDANQPVKLYYNGPMFRYERKQKGRYRQFVQFGVEAIGSENPAIDAEVIHMVYNIYKSFGLKHIKIVLNSIGDMDSREEYKQALIEHFEPHINNFCNDCKNRLHTNPMRILDCKVDHEQPTVKTAPKITEYLNDYSKNYYEEVKQYLDLLNIPYIEDASLVRGLDYYTHTAFEVMSEAEGFGAITTLCGGGRYNGLLEMLDGPKETGIGFALSIERLLLAIEAEDIQLDVEESVDIFVVTMPETVKEAVKIVAELRNAGIRCDMDYLGRKMKGQMKQADRIHATYTVVLGSNEIETNKIQIKAMQTGESETIKLQDIASYIKGE.

This sequence belongs to the class-II aminoacyl-tRNA synthetase family. Homodimer.

Its subcellular location is the cytoplasm. It carries out the reaction tRNA(His) + L-histidine + ATP = L-histidyl-tRNA(His) + AMP + diphosphate + H(+). This chain is Histidine--tRNA ligase, found in Macrococcus caseolyticus (strain JCSC5402) (Macrococcoides caseolyticum).